The primary structure comprises 376 residues: MAKADFYETLGVAKTADEKELKSAFRKLAMKFHPDKNPDDKDAERKFKEINEAYEMLKDPQKRAAYDRYGHAAFEHGGMGGGGGGGFAGGGFSDIFEDIFGEMMGGGRARQRSSGGRERGADLRYNMEITLEEAFSGKTAQIRVPTSITCDVCSGSGAKPGTQPKNCGTCQGSGRVRAAQGFFSIERTCPTCHGRGQIIPDPCPKCHGQGRVTEERSLSVNIPAGIEDGTRIRLQGEGEAGARGGPAGDLYIFLSVKPHEFYQRDGADLYCAVPISMTTAALGGTFDVATLDGTKSRVSVPEGTQAGKQFRLKSKGMPVLRSAQTGDLYIQIQIETPQKLTKRQRELLQEFEQLSSKENNPESTGFFARMKEFFEG.

The J domain maps to 5-70 (DFYETLGVAK…QKRAAYDRYG (66 aa)). A CR-type zinc finger spans residues 137–215 (GKTAQIRVPT…CHGQGRVTEE (79 aa)). Zn(2+) contacts are provided by Cys150, Cys153, Cys167, Cys170, Cys189, Cys192, Cys203, and Cys206. 4 CXXCXGXG motif repeats span residues 150 to 157 (CDVCSGSG), 167 to 174 (CGTCQGSG), 189 to 196 (CPTCHGRG), and 203 to 210 (CPKCHGQG).

The protein belongs to the DnaJ family. In terms of assembly, homodimer. Requires Zn(2+) as cofactor.

Its subcellular location is the cytoplasm. Participates actively in the response to hyperosmotic and heat shock by preventing the aggregation of stress-denatured proteins and by disaggregating proteins, also in an autonomous, DnaK-independent fashion. Unfolded proteins bind initially to DnaJ; upon interaction with the DnaJ-bound protein, DnaK hydrolyzes its bound ATP, resulting in the formation of a stable complex. GrpE releases ADP from DnaK; ATP binding to DnaK triggers the release of the substrate protein, thus completing the reaction cycle. Several rounds of ATP-dependent interactions between DnaJ, DnaK and GrpE are required for fully efficient folding. Also involved, together with DnaK and GrpE, in the DNA replication of plasmids through activation of initiation proteins. This Rhizobium leguminosarum bv. trifolii (strain WSM2304) protein is Chaperone protein DnaJ.